Consider the following 523-residue polypeptide: Frizzled-4 (523 aa).

An N-terminal signal peptide occupies residues 1–22 (MGARSLTLLYLLCCLVVGLIAG). Topologically, residues 23–198 (FGEEEERSCD…KCGYDSGLYN (176 aa)) are extracellular. In terms of domain architecture, FZ spans 26-147 (EEERSCDPIR…NDHNHMCMEG (122 aa)). Disulfide bonds link C31-C92, C39-C85, C76-C114, C103-C144, C107-C131, C167-C186, C190-C268, and C288-C363. N45 carries an N-linked (GlcNAc...) asparagine glycan. An N-linked (GlcNAc...) asparagine glycan is attached at N130. Residues 199-229 (RLSKEFTDIWMAVWASLCFISTAFTVLTFLI) form a helical membrane-spanning segment. Residues 230–235 (DSSRFC) are Cytoplasmic-facing. The chain crosses the membrane as a helical span at residues 236–261 (YPERPIIFLSMCYNIYSIAYIVRLTV). The Extracellular portion of the chain corresponds to 262–285 (GRERISCDFEEAAEPVLIQEGLKN). A helical membrane pass occupies residues 286-319 (TGCAIIFLLMYFFGMASSIWWVILTLTWFLAAGL). Topologically, residues 320 to 322 (KWG) are cytoplasmic. The chain crosses the membrane as a helical span at residues 323 to 351 (HEAIEMHSSYFHIAAWAIPAVKTIVILIM). Residues 352-369 (RLVDADELTGLCYVGNQN) are Extracellular-facing. Residues 370-396 (IDALTGFVVAPLFTYLVIGTLFIAAGL) traverse the membrane as a helical segment. The Cytoplasmic segment spans residues 397-417 (VALFKIRSNLQKDGTKTDKLE). The chain crosses the membrane as a helical span at residues 418–443 (RLMVKIGVFSVLYTVPATCVIACYFY). At 444 to 459 (EVSNWNVFRYTADDSN) the chain is on the extracellular side. A helical transmembrane segment spans residues 460 to 481 (MAVEMLNIFMSLLVGITSGMWI). At 482–523 (WSAKTLHTWQKCTNRLVNSGKVKRKKRVDGWVKPGKGNETVV) the chain is on the cytoplasmic side. The Lys-Thr-X-X-X-Trp motif, mediates interaction with the PDZ domain of Dvl family members signature appears at 485 to 490 (KTLHTW). The short motif at 521-523 (TVV) is the PDZ-binding element.

The protein belongs to the G-protein coupled receptor Fz/Smo family. Interacts (via FZ domain) with tsku; tsku competes with wnt2b for binding to fzd4, inhibiting Wnt signaling and repressing peripheral eye development.

Its subcellular location is the cell membrane. Functionally, receptor for Wnt proteins. Most frizzled receptors are coupled to the beta-catenin canonical signaling pathway, which leads to the activation of disheveled proteins, inhibition of GSK-3 kinase, nuclear accumulation of beta-catenin and activation of Wnt target genes. A second signaling pathway involving PKC and calcium fluxes has been seen for some family members, but it is not yet clear if it represents a distinct pathway or if it can be integrated in the canonical pathway, as PKC seems to be required for Wnt-mediated inactivation of GSK-3 kinase. Both pathways seem to involve interactions with G-proteins. May be involved in transduction and intercellular transmission of polarity information during tissue morphogenesis and/or in differentiated tissues. Activated by Wnt5A. This is Frizzled-4 (fzd4) from Xenopus laevis (African clawed frog).